A 312-amino-acid polypeptide reads, in one-letter code: Porphobilinogen deaminase (312 aa).

Residue Cys-241 is modified to S-(dipyrrolylmethanemethyl)cysteine.

Belongs to the HMBS family. Monomer. It depends on dipyrromethane as a cofactor.

The enzyme catalyses 4 porphobilinogen + H2O = hydroxymethylbilane + 4 NH4(+). It functions in the pathway porphyrin-containing compound metabolism; protoporphyrin-IX biosynthesis; coproporphyrinogen-III from 5-aminolevulinate: step 2/4. Its function is as follows. Tetrapolymerization of the monopyrrole PBG into the hydroxymethylbilane pre-uroporphyrinogen in several discrete steps. This Trichlorobacter lovleyi (strain ATCC BAA-1151 / DSM 17278 / SZ) (Geobacter lovleyi) protein is Porphobilinogen deaminase.